A 432-amino-acid chain; its full sequence is D-amino acid dehydrogenase (432 aa).

Residue 3 to 17 (VVILGSGVVGVTSAW) coordinates FAD.

Belongs to the DadA oxidoreductase family. The cofactor is FAD.

The protein localises to the cell inner membrane. The enzyme catalyses a D-alpha-amino acid + A + H2O = a 2-oxocarboxylate + AH2 + NH4(+). It participates in amino-acid degradation; D-alanine degradation; NH(3) and pyruvate from D-alanine: step 1/1. In terms of biological role, oxidative deamination of D-amino acids. This is D-amino acid dehydrogenase from Salmonella typhi.